The following is a 267-amino-acid chain: Phosphate import ATP-binding protein PstB 2 (267 aa).

The region spanning leucine 21–valine 262 is the ABC transporter domain. Glycine 53–serine 60 is an ATP binding site.

Belongs to the ABC transporter superfamily. Phosphate importer (TC 3.A.1.7) family. The complex is composed of two ATP-binding proteins (PstB), two transmembrane proteins (PstC and PstA) and a solute-binding protein (PstS).

It localises to the cell membrane. It catalyses the reaction phosphate(out) + ATP + H2O = ADP + 2 phosphate(in) + H(+). Part of the ABC transporter complex PstSACB involved in phosphate import. Responsible for energy coupling to the transport system. This chain is Phosphate import ATP-binding protein PstB 2, found in Streptococcus agalactiae serotype Ia (strain ATCC 27591 / A909 / CDC SS700).